A 145-amino-acid polypeptide reads, in one-letter code: Hemoglobin subunit beta-A (145 aa).

One can recognise a Globin domain in the interval 1 to 145 (MLTAEEKAAV…VANALAHRYH (145 aa)). 2 residues coordinate heme b: H62 and H91.

Belongs to the globin family. In terms of assembly, heterotetramer of two alpha chains and two beta chains. Red blood cells.

In terms of biological role, involved in oxygen transport from the lung to the various peripheral tissues. This chain is Hemoglobin subunit beta-A, found in Bos javanicus (Wild banteng).